We begin with the raw amino-acid sequence, 715 residues long: ATP-dependent zinc metalloprotease YME1L1 (715 aa).

At 1 to 237 (MFSLSSTVQP…TNDSLRRTRL (237 aa)) the chain is on the mitochondrial matrix side. The disordered stretch occupies residues 34–54 (NTPVSQKQHRDTVPEHEAPSS). Residues 41-52 (QHRDTVPEHEAP) are compositionally biased toward basic and acidic residues. The chain crosses the membrane as a helical span at residues 238 to 258 (ILFVLLLFGIYGLLKNPFLSV). Residues 259–715 (RFRTTTGLDS…VLEGKKLEVR (457 aa)) are Mitochondrial intermembrane-facing. Val283, Thr325, Gly326, Lys327, Thr328, and Leu329 together coordinate ATP. Position 541 (His541) interacts with Zn(2+). Glu542 is an active-site residue. Positions 545 and 619 each coordinate Zn(2+).

In the N-terminal section; belongs to the AAA ATPase family. The protein in the C-terminal section; belongs to the peptidase M41 family. As to quaternary structure, homohexamer; may also form heterohexamers. Exists in several complexes of 600-1100 kDa. Interacts with AFG1L. Requires Zn(2+) as cofactor. Proteolytically processed by mitochondrial processing peptidase (MPP) to generate the mature form. Degraded in an OMA1-dependent manner in response to oxidative stress. Detected in heart and skeletal muscle (at protein level).

Its subcellular location is the mitochondrion inner membrane. It localises to the mitochondrion. The enzyme catalyses ATP + H2O = ADP + phosphate + H(+). ATP-dependent metalloprotease that catalyzes the degradation of folded and unfolded proteins with a suitable degron sequence in the mitochondrial intermembrane region. Plays an important role in regulating mitochondrial morphology and function by cleaving OPA1 at position S2, giving rise to a form of OPA1 that promotes maintenance of normal mitochondrial structure and mitochondrial protein metabolism. Ensures cell proliferation, maintains normal cristae morphology and complex I respiration activity, promotes antiapoptotic activity and protects mitochondria from the accumulation of oxidatively damaged membrane proteins. Required to control the accumulation of nonassembled respiratory chain subunits (NDUFB6, OX4 and ND1). Involved in the mitochondrial adaptation in response to various signals, such as stress or developmental cues, by mediating degradation of mitochondrial proteins to rewire the mitochondrial proteome. Catalyzes degradation of mitochondrial proteins, such as translocases, lipid transfer proteins and metabolic enzymes in response to nutrient starvation in order to limit mitochondrial biogenesis: mechanistically, YME1L is activated by decreased phosphatidylethanolamine levels caused by LPIN1 activity in response to mTORC1 inhibition. Acts as a regulator of adult neural stem cell self-renewal by promoting mitochondrial proteome rewiring, preserving neural stem and progenitor cells self-renewal. Required for normal, constitutive degradation of PRELID1. Catalyzes the degradation of OMA1 in response to membrane depolarization. Mediates degradation of TIMM17A downstream of the integrated stress response (ISR). Catalyzes degradation of MICU1 when MICU1 is not assembled via an interchain disulfide. This chain is ATP-dependent zinc metalloprotease YME1L1 (Yme1l1), found in Mus musculus (Mouse).